A 515-amino-acid chain; its full sequence is Nectin-1 (515 aa).

The N-terminal stretch at methionine 1 to threonine 30 is a signal peptide. The 111-residue stretch at glutamine 31–threonine 141 folds into the Ig-like V-type domain. The Extracellular portion of the chain corresponds to glutamine 31–alanine 354. 7 N-linked (GlcNAc...) asparagine glycosylation sites follow: asparagine 36, asparagine 72, asparagine 139, asparagine 202, asparagine 286, asparagine 297, and asparagine 332. Residues cysteine 51 and cysteine 124 are joined by a disulfide bond. 2 consecutive Ig-like C2-type domains span residues lysine 145 to valine 243 and proline 247 to threonine 334. 2 cysteine pairs are disulfide-bonded: cysteine 172–cysteine 226 and cysteine 269–cysteine 316. The interval tryptophan 282–threonine 299 is interaction with FGFR. A helical transmembrane segment spans residues isoleucine 355–valine 375. At alanine 376–valine 515 the chain is on the cytoplasmic side. Positions tyrosine 399–tyrosine 486 are disordered. A phosphoserine mark is found at serine 421, serine 433, and serine 434. Tyrosine 435 is modified (phosphotyrosine). The segment covering glycine 447 to arginine 464 has biased composition (basic and acidic residues). Serine 509 carries the phosphoserine modification.

This sequence belongs to the nectin family. As to quaternary structure, cis- and trans-homodimer. Can form trans-heterodimers with NECTIN3 and with NECTIN4. Interaction between NECTIN1 and NECTIN3 on the pre- and postsynaptic sites, respectively, initiates the formation of puncta adherentia junctions between axons and dendrites. Interacts (via cytoplasmic domain) with AFDN (via PDZ domain); this interaction recruits NECTIN1 to cadherin-based adherens junctions and provides a connection with the actin cytoskeleton. Interacts with integrin alphaV/beta3. Interacts (via Ig-like C2-type domain 2) with FGFR1, FGFR2 and FGFR3. (Microbial infection) Interacts with herpes pseudorabies virus/PRV envelope glycoprotein D.

It is found in the cell membrane. It localises to the cell junction. The protein localises to the adherens junction. Its subcellular location is the presynaptic cell membrane. Cell adhesion molecule that promotes cell-cell contacts and plays important roles in the development of the nervous system. Acts by forming homophilic or heterophilic trans-dimers. Heterophilic interactions have been detected between NECTIN1 and NECTIN3 and between NECTIN1 and NECTIN4. Involved in axon guidance by promoting contacts between the commissural axons and the floor plate cells. Involved in synaptogegesis. Has some neurite outgrowth-promoting activity. Promotes formation of checkerboard-like cellular pattern of hair cells and supporting cells in the auditory epithelium via heterophilic interaction with NECTIN3: NECTIN1 is present in the membrane of hair cells and associates with NECTIN3 on supporting cells, thereby mediating heterotypic adhesion between these two cell types. Required for enamel mineralization. Its function is as follows. (Microbial infection) Acts as a receptor for pseudorabies virus/PRV. The sequence is that of Nectin-1 from Mus musculus (Mouse).